The primary structure comprises 131 residues: Small ribosomal subunit protein uS11 (131 aa).

Residues 1-15 (MAAQKVKKTRRRKER) show a composition bias toward basic residues. The tract at residues 1–23 (MAAQKVKKTRRRKERKNVEHGAA) is disordered.

It belongs to the universal ribosomal protein uS11 family. As to quaternary structure, part of the 30S ribosomal subunit. Interacts with proteins S7 and S18. Binds to IF-3.

Located on the platform of the 30S subunit, it bridges several disparate RNA helices of the 16S rRNA. Forms part of the Shine-Dalgarno cleft in the 70S ribosome. The chain is Small ribosomal subunit protein uS11 from Clostridium perfringens (strain 13 / Type A).